Here is a 251-residue protein sequence, read N- to C-terminus: Dehydration-responsive element-binding protein 1I (251 aa).

A disordered region spans residues 1-50 (MCTSKLEEITGEWPPPALQAASTTSSSEPCRRLSPPSSKRPAGRTKFHET). The AP2/ERF DNA-binding region spans 54–114 (VFRGVRRRGR…GRAAACLNFA (61 aa)). A disordered region spans residues 169-198 (ATSEPSAASDDDAVTSSSSTTDADEEASPF).

It belongs to the AP2/ERF transcription factor family. ERF subfamily.

Its subcellular location is the nucleus. Transcriptional activator that binds specifically to the DNA sequence 5'-[AG]CCGAC-3'. Binding to the C-repeat/DRE element mediates high salinity- and dehydration-inducible transcription. The sequence is that of Dehydration-responsive element-binding protein 1I (DREB1I) from Oryza sativa subsp. japonica (Rice).